We begin with the raw amino-acid sequence, 37 residues long: Potassium channel toxin alpha-KTx 1.4 (37 aa).

3 disulfides stabilise this stretch: C7-C28, C13-C33, and C17-C35.

Belongs to the short scorpion toxin superfamily. Potassium channel inhibitor family. Alpha-KTx 01 subfamily. In terms of tissue distribution, expressed by the venom gland.

It is found in the secreted. Functionally, blocks selectively the high conductance calcium-activated (maxi-K) potassium channels. In Centruroides limbatus (Bark scorpion), this protein is Potassium channel toxin alpha-KTx 1.4.